A 102-amino-acid chain; its full sequence is Large ribosomal subunit protein bL21 (102 aa).

The protein belongs to the bacterial ribosomal protein bL21 family. Part of the 50S ribosomal subunit. Contacts protein L20.

Its function is as follows. This protein binds to 23S rRNA in the presence of protein L20. The chain is Large ribosomal subunit protein bL21 from Nitratidesulfovibrio vulgaris (strain DSM 19637 / Miyazaki F) (Desulfovibrio vulgaris).